A 316-amino-acid chain; its full sequence is Ribosomal RNA small subunit methyltransferase H (316 aa).

S-adenosyl-L-methionine-binding positions include 35–37 (SGH), D55, F84, D105, and Q112.

The protein belongs to the methyltransferase superfamily. RsmH family.

It localises to the cytoplasm. The enzyme catalyses cytidine(1402) in 16S rRNA + S-adenosyl-L-methionine = N(4)-methylcytidine(1402) in 16S rRNA + S-adenosyl-L-homocysteine + H(+). In terms of biological role, specifically methylates the N4 position of cytidine in position 1402 (C1402) of 16S rRNA. This is Ribosomal RNA small subunit methyltransferase H from Streptococcus pyogenes serotype M49 (strain NZ131).